The following is a 416-amino-acid chain: Histidine--tRNA ligase (416 aa).

It belongs to the class-II aminoacyl-tRNA synthetase family.

It localises to the cytoplasm. The catalysed reaction is tRNA(His) + L-histidine + ATP = L-histidyl-tRNA(His) + AMP + diphosphate + H(+). This is Histidine--tRNA ligase (hisS) from Methanocaldococcus jannaschii (strain ATCC 43067 / DSM 2661 / JAL-1 / JCM 10045 / NBRC 100440) (Methanococcus jannaschii).